The chain runs to 214 residues: uncharacterized protein (214 aa).

The next 5 membrane-spanning stretches (helical) occupy residues 18-38 (LLLLCIGGFYALGVSLSNTFV), 51-71 (DLALYNLAVVTMQPLTFIVAG), 80-100 (ILVLRLGVSCLAVFFVTVLLV), 108-128 (LLVLGALLGVGYGFYWLAFNV), and 145-165 (FFGVLTSSAGMIGPIAAGYII).

The protein localises to the cell membrane. This is an uncharacterized protein from Geobacillus stearothermophilus (Bacillus stearothermophilus).